Consider the following 697-residue polypeptide: Elongation factor G (697 aa).

One can recognise a tr-type G domain in the interval 10-285; sequence AKTRNIGIMA…GVIDYLPSPL (276 aa). Residues 19 to 26, 83 to 87, and 137 to 140 contribute to the GTP site; these read AHIDAGKT, DTPGH, and NKMD.

The protein belongs to the TRAFAC class translation factor GTPase superfamily. Classic translation factor GTPase family. EF-G/EF-2 subfamily.

The protein resides in the cytoplasm. Its function is as follows. Catalyzes the GTP-dependent ribosomal translocation step during translation elongation. During this step, the ribosome changes from the pre-translocational (PRE) to the post-translocational (POST) state as the newly formed A-site-bound peptidyl-tRNA and P-site-bound deacylated tRNA move to the P and E sites, respectively. Catalyzes the coordinated movement of the two tRNA molecules, the mRNA and conformational changes in the ribosome. The chain is Elongation factor G from Lactobacillus helveticus (strain DPC 4571).